Consider the following 432-residue polypeptide: Phosphomethylpyrimidine synthase (432 aa).

Substrate is bound by residues Asn66, Met95, Tyr124, His163, Ser185 to Gly187, Asp226 to Arg229, and Glu265. Residue His269 coordinates Zn(2+). A substrate-binding site is contributed by Tyr292. His333 contributes to the Zn(2+) binding site. Residues Cys409, Cys412, and Cys416 each contribute to the [4Fe-4S] cluster site.

The protein belongs to the ThiC family. It depends on [4Fe-4S] cluster as a cofactor.

The catalysed reaction is 5-amino-1-(5-phospho-beta-D-ribosyl)imidazole + S-adenosyl-L-methionine = 4-amino-2-methyl-5-(phosphooxymethyl)pyrimidine + CO + 5'-deoxyadenosine + formate + L-methionine + 3 H(+). It participates in cofactor biosynthesis; thiamine diphosphate biosynthesis. Its function is as follows. Catalyzes the synthesis of the hydroxymethylpyrimidine phosphate (HMP-P) moiety of thiamine from aminoimidazole ribotide (AIR) in a radical S-adenosyl-L-methionine (SAM)-dependent reaction. This chain is Phosphomethylpyrimidine synthase, found in Desulforamulus reducens (strain ATCC BAA-1160 / DSM 100696 / MI-1) (Desulfotomaculum reducens).